The chain runs to 166 residues: Large ribosomal subunit protein uL10 (166 aa).

It belongs to the universal ribosomal protein uL10 family. Part of the ribosomal stalk of the 50S ribosomal subunit. The N-terminus interacts with L11 and the large rRNA to form the base of the stalk. The C-terminus forms an elongated spine to which L12 dimers bind in a sequential fashion forming a multimeric L10(L12)X complex.

Functionally, forms part of the ribosomal stalk, playing a central role in the interaction of the ribosome with GTP-bound translation factors. This is Large ribosomal subunit protein uL10 from Shewanella amazonensis (strain ATCC BAA-1098 / SB2B).